We begin with the raw amino-acid sequence, 400 residues long: Argininosuccinate synthase (400 aa).

Residues 11-19 and Ala38 contribute to the ATP site; that span reads AYSGGLDTS. 2 residues coordinate L-citrulline: Tyr89 and Ser94. Residue Gly119 participates in ATP binding. Thr121, Asn125, and Asp126 together coordinate L-aspartate. Residue Asn125 coordinates L-citrulline. Arg129, Ser178, Ser187, Glu263, and Tyr275 together coordinate L-citrulline.

The protein belongs to the argininosuccinate synthase family. Type 1 subfamily. As to quaternary structure, homotetramer.

The protein localises to the cytoplasm. The enzyme catalyses L-citrulline + L-aspartate + ATP = 2-(N(omega)-L-arginino)succinate + AMP + diphosphate + H(+). It participates in amino-acid biosynthesis; L-arginine biosynthesis; L-arginine from L-ornithine and carbamoyl phosphate: step 2/3. This Desulfatibacillum aliphaticivorans protein is Argininosuccinate synthase.